The primary structure comprises 303 residues: N-acetyl-D-glucosamine kinase (303 aa).

ATP is bound by residues 4–11 and 133–140; these read GFDMGGTK and GVGGGLIV. Zn(2+)-binding residues include H157, C177, C179, and C184.

The protein belongs to the ROK (NagC/XylR) family. NagK subfamily.

It catalyses the reaction N-acetyl-D-glucosamine + ATP = N-acetyl-D-glucosamine 6-phosphate + ADP + H(+). It participates in cell wall biogenesis; peptidoglycan recycling. Catalyzes the phosphorylation of N-acetyl-D-glucosamine (GlcNAc) derived from cell-wall degradation, yielding GlcNAc-6-P. This is N-acetyl-D-glucosamine kinase from Yersinia enterocolitica serotype O:8 / biotype 1B (strain NCTC 13174 / 8081).